Reading from the N-terminus, the 300-residue chain is Actin-related protein 2/3 complex subunit 2-A (300 aa).

This sequence belongs to the ARPC2 family. In terms of assembly, component of the Arp2/3 complex composed of actr2/arp2, actr3/arp3, arpc1 (arpc1a or arpc1b), arpc2, arpc3, arpc4 and arpc5.

The protein resides in the cytoplasm. The protein localises to the cytoskeleton. Its subcellular location is the cell projection. It localises to the nucleus. Functionally, actin-binding component of the Arp2/3 complex, a multiprotein complex that mediates actin polymerization upon stimulation by nucleation-promoting factor (NPF). The Arp2/3 complex mediates the formation of branched actin networks in the cytoplasm, providing the force for cell motility. In addition to its role in the cytoplasmic cytoskeleton, the Arp2/3 complex also promotes actin polymerization in the nucleus, thereby regulating gene transcription and repair of damaged DNA. The Arp2/3 complex promotes homologous recombination (HR) repair in response to DNA damage by promoting nuclear actin polymerization, leading to drive motility of double-strand breaks (DSBs). The protein is Actin-related protein 2/3 complex subunit 2-A (arpc2-a) of Xenopus laevis (African clawed frog).